Reading from the N-terminus, the 387-residue chain is Succinyl-diaminopimelate desuccinylase (387 aa).

Residue H75 coordinates Zn(2+). Residue D77 is part of the active site. A Zn(2+)-binding site is contributed by D108. Residue E139 is the Proton acceptor of the active site. Zn(2+) is bound by residues E140, E168, and H357.

Belongs to the peptidase M20A family. DapE subfamily. In terms of assembly, homodimer. Requires Zn(2+) as cofactor. Co(2+) is required as a cofactor.

It catalyses the reaction N-succinyl-(2S,6S)-2,6-diaminopimelate + H2O = (2S,6S)-2,6-diaminopimelate + succinate. The protein operates within amino-acid biosynthesis; L-lysine biosynthesis via DAP pathway; LL-2,6-diaminopimelate from (S)-tetrahydrodipicolinate (succinylase route): step 3/3. In terms of biological role, catalyzes the hydrolysis of N-succinyl-L,L-diaminopimelic acid (SDAP), forming succinate and LL-2,6-diaminopimelate (DAP), an intermediate involved in the bacterial biosynthesis of lysine and meso-diaminopimelic acid, an essential component of bacterial cell walls. The polypeptide is Succinyl-diaminopimelate desuccinylase (Caulobacter sp. (strain K31)).